We begin with the raw amino-acid sequence, 329 residues long: Probable nicotianamine synthase 7 (329 aa).

The protein belongs to the nicotianamine synthase (NAS)-like family.

It catalyses the reaction 3 S-adenosyl-L-methionine = nicotianamine + 3 S-methyl-5'-thioadenosine + 3 H(+). Its function is as follows. Synthesizes nicotianamine, a polyamine that is the first intermediate in the synthesis of the phytosiderophores of the mugineic acid type found in gramineae which serves as a sensor for the physiological iron status within the plant, and/or might be involved in the transport of iron. The polypeptide is Probable nicotianamine synthase 7 (NAS7) (Hordeum vulgare (Barley)).